A 197-amino-acid chain; its full sequence is Recombination protein RecR (197 aa).

The segment at 57 to 72 (CSVCFAITEDDPCWIC) adopts a C4-type zinc-finger fold. The 96-residue stretch at 79–174 (GTICVVEEPQ…KVTRLAHGIP (96 aa)) folds into the Toprim domain.

The protein belongs to the RecR family.

In terms of biological role, may play a role in DNA repair. It seems to be involved in an RecBC-independent recombinational process of DNA repair. It may act with RecF and RecO. In Citrifermentans bemidjiense (strain ATCC BAA-1014 / DSM 16622 / JCM 12645 / Bem) (Geobacter bemidjiensis), this protein is Recombination protein RecR.